The chain runs to 108 residues: Pyrimidine/purine nucleoside phosphorylase (108 aa).

It belongs to the nucleoside phosphorylase PpnP family.

It catalyses the reaction a purine D-ribonucleoside + phosphate = a purine nucleobase + alpha-D-ribose 1-phosphate. It carries out the reaction adenosine + phosphate = alpha-D-ribose 1-phosphate + adenine. The catalysed reaction is cytidine + phosphate = cytosine + alpha-D-ribose 1-phosphate. The enzyme catalyses guanosine + phosphate = alpha-D-ribose 1-phosphate + guanine. It catalyses the reaction inosine + phosphate = alpha-D-ribose 1-phosphate + hypoxanthine. It carries out the reaction thymidine + phosphate = 2-deoxy-alpha-D-ribose 1-phosphate + thymine. The catalysed reaction is uridine + phosphate = alpha-D-ribose 1-phosphate + uracil. The enzyme catalyses xanthosine + phosphate = alpha-D-ribose 1-phosphate + xanthine. Functionally, catalyzes the phosphorolysis of diverse nucleosides, yielding D-ribose 1-phosphate and the respective free bases. Can use uridine, adenosine, guanosine, cytidine, thymidine, inosine and xanthosine as substrates. Also catalyzes the reverse reactions. This chain is Pyrimidine/purine nucleoside phosphorylase, found in Acinetobacter baylyi (strain ATCC 33305 / BD413 / ADP1).